A 252-amino-acid chain; its full sequence is Imidazole glycerol phosphate synthase subunit HisF (252 aa).

Active-site residues include D11 and D130.

This sequence belongs to the HisA/HisF family. In terms of assembly, heterodimer of HisH and HisF.

The protein localises to the cytoplasm. It catalyses the reaction 5-[(5-phospho-1-deoxy-D-ribulos-1-ylimino)methylamino]-1-(5-phospho-beta-D-ribosyl)imidazole-4-carboxamide + L-glutamine = D-erythro-1-(imidazol-4-yl)glycerol 3-phosphate + 5-amino-1-(5-phospho-beta-D-ribosyl)imidazole-4-carboxamide + L-glutamate + H(+). Its pathway is amino-acid biosynthesis; L-histidine biosynthesis; L-histidine from 5-phospho-alpha-D-ribose 1-diphosphate: step 5/9. Functionally, IGPS catalyzes the conversion of PRFAR and glutamine to IGP, AICAR and glutamate. The HisF subunit catalyzes the cyclization activity that produces IGP and AICAR from PRFAR using the ammonia provided by the HisH subunit. This Streptococcus sanguinis (strain SK36) protein is Imidazole glycerol phosphate synthase subunit HisF.